The primary structure comprises 798 residues: Serine/threonine-protein kinase SIK2 (798 aa).

The Protein kinase domain maps to 26–277 (YDIERTLGKG…ISQIKQHKWM (252 aa)). ATP-binding positions include 32 to 40 (LGKGNFAVV) and lysine 55. The active-site Proton acceptor is the aspartate 148. The residue at position 181 (threonine 181) is a Phosphothreonine. A Phosphoserine modification is found at serine 185. In terms of domain architecture, UBA spans 302–342 (DYNEQVLGIMQTLGIDRQRTVESLQNSSYNHFAAIYYLLLE). Polar residues predominate over residues 351-361 (QLSSRPATGRQ). Residues 351-382 (QLSSRPATGRQQRPRSSEISNAEMPQDSLTSE) form a disordered region. Serine 575 carries the phosphoserine modification. Residues 672–691 (ACPQTSQTSATNGLPPSDSA) are disordered. The span at 673–685 (CPQTSQTSATNGL) shows a compositional bias: polar residues.

This sequence belongs to the protein kinase superfamily. CAMK Ser/Thr protein kinase family. SNF1 subfamily. The cofactor is Mg(2+). Post-translationally, phosphorylated at Thr-181 by STK11/LKB1 in complex with STE20-related adapter-alpha (STRADA) pseudo kinase and CAB39. In terms of tissue distribution, ubiquitously expressed in embryonic tissue.

It localises to the cytoplasm. It catalyses the reaction L-seryl-[protein] + ATP = O-phospho-L-seryl-[protein] + ADP + H(+). The enzyme catalyses L-threonyl-[protein] + ATP = O-phospho-L-threonyl-[protein] + ADP + H(+). With respect to regulation, activated by phosphorylation on Thr-181. In terms of biological role, phosphorylates IRS1 in insulin-stimulated adipocytes, potentially modulating the efficiency of insulin signal transduction. Inhibits CREB activity by phosphorylating and repressing the CREB-specific coactivators, CRTC1-3. This chain is Serine/threonine-protein kinase SIK2 (SIK2), found in Gallus gallus (Chicken).